The primary structure comprises 32 residues: Cytochrome b6-f complex subunit 7 (32 aa).

The helical transmembrane segment at 5-25 (IFGTAAIFWVLIPAGLLGGAL) threads the bilayer.

This sequence belongs to the PetM family. As to quaternary structure, the 4 large subunits of the cytochrome b6-f complex are cytochrome b6, subunit IV (17 kDa polypeptide, PetD), cytochrome f and the Rieske protein, while the 4 small subunits are PetG, PetL, PetM and PetN. The complex functions as a dimer.

The protein resides in the cellular thylakoid membrane. Functionally, component of the cytochrome b6-f complex, which mediates electron transfer between photosystem II (PSII) and photosystem I (PSI), cyclic electron flow around PSI, and state transitions. The chain is Cytochrome b6-f complex subunit 7 from Prochlorococcus marinus (strain SARG / CCMP1375 / SS120).